A 418-amino-acid polypeptide reads, in one-letter code: CinA-like protein (418 aa).

It belongs to the CinA family.

The protein is CinA-like protein of Leptospira interrogans serogroup Icterohaemorrhagiae serovar copenhageni (strain Fiocruz L1-130).